The primary structure comprises 61 residues: Small ribosomal subunit protein uS14 (61 aa).

Residues Cys24, Cys27, Cys40, and Cys43 each contribute to the Zn(2+) site.

The protein belongs to the universal ribosomal protein uS14 family. Zinc-binding uS14 subfamily. Part of the 30S ribosomal subunit. Contacts proteins S3 and S10. Zn(2+) is required as a cofactor.

In terms of biological role, binds 16S rRNA, required for the assembly of 30S particles and may also be responsible for determining the conformation of the 16S rRNA at the A site. The polypeptide is Small ribosomal subunit protein uS14 (Mycoplasma genitalium (strain ATCC 33530 / DSM 19775 / NCTC 10195 / G37) (Mycoplasmoides genitalium)).